A 277-amino-acid polypeptide reads, in one-letter code: Glutamate racemase (277 aa).

Residues 9 to 10 (DS) and 41 to 42 (YG) contribute to the substrate site. Residue Cys73 is the Proton donor/acceptor of the active site. 74–75 (NT) contacts substrate. Cys183 (proton donor/acceptor) is an active-site residue. 184–185 (TH) is a binding site for substrate.

It belongs to the aspartate/glutamate racemases family.

The catalysed reaction is L-glutamate = D-glutamate. It functions in the pathway cell wall biogenesis; peptidoglycan biosynthesis. Its function is as follows. Provides the (R)-glutamate required for cell wall biosynthesis. In Shewanella denitrificans (strain OS217 / ATCC BAA-1090 / DSM 15013), this protein is Glutamate racemase.